The chain runs to 113 residues: U11-theraphotoxin-Hhn1a (113 aa).

A signal peptide spans 1-21; that stretch reads MNTVRVAFLLVFVLAVSLGQA. Positions 22 to 74 are excised as a propeptide; the sequence is DKDENRMEMQEKTEQGKSYLDFAENLLLQKLEELEAKLLEEDSEESRNSRQKR. The interval 61-83 is disordered; sequence EEDSEESRNSRQKRCIGEGVPCD. Cystine bridges form between C75–C90, C82–C95, and C89–C110.

It belongs to the neurotoxin 14 (magi-1) family. 01 (HNTX-16) subfamily. As to expression, expressed by the venom gland.

It localises to the secreted. Probable ion channel inhibitor. The protein is U11-theraphotoxin-Hhn1a of Cyriopagopus hainanus (Chinese bird spider).